Reading from the N-terminus, the 406-residue chain is Nuclear hormone receptor family member nhr-133 (406 aa).

Positions Ser8–Asn83 form a DNA-binding region, nuclear receptor. The NR C4-type zinc finger occupies Cys11 to Cys31. The NR C4-type; degenerate zinc finger occupies Asp47 to Cys66. The NR LBD domain occupies Tyr150 to Ser406.

It belongs to the nuclear hormone receptor family.

It is found in the nucleus. Functionally, orphan nuclear receptor. This chain is Nuclear hormone receptor family member nhr-133, found in Caenorhabditis elegans.